A 293-amino-acid chain; its full sequence is Glutamyl-Q tRNA(Asp) synthetase (293 aa).

L-glutamate contacts are provided by residues 4-8 (RYAPS) and Glu40. Residues 7-17 (PSPSGDLHFGN) carry the 'HIGH' region motif. Zn(2+) contacts are provided by Cys92, Cys94, Tyr113, and Cys117. Positions 180 and 198 each coordinate L-glutamate. Positions 236–240 (RLAKR) match the 'KMSKS' region motif. ATP is bound at residue Lys239.

It belongs to the class-I aminoacyl-tRNA synthetase family. GluQ subfamily. The cofactor is Zn(2+).

Catalyzes the tRNA-independent activation of glutamate in presence of ATP and the subsequent transfer of glutamate onto a tRNA(Asp). Glutamate is transferred on the 2-amino-5-(4,5-dihydroxy-2-cyclopenten-1-yl) moiety of the queuosine in the wobble position of the QUC anticodon. In Corynebacterium glutamicum (strain ATCC 13032 / DSM 20300 / JCM 1318 / BCRC 11384 / CCUG 27702 / LMG 3730 / NBRC 12168 / NCIMB 10025 / NRRL B-2784 / 534), this protein is Glutamyl-Q tRNA(Asp) synthetase.